Consider the following 1081-residue polypeptide: Inversin (1081 aa).

16 ANK repeats span residues Ser13–Asp42, Phe47–Lys76, Ser80–Lys110, Glu113–Thr144, Asn148–Ile177, Glu181–Leu213, Glu220–Ser250, Leu254–Ile283, Gln288–Asp317, Glu321–Ile350, Tyr356–Ala385, Met389–Leu418, Asp422–Val451, Ala455–Ile484, Glu488–Gln517, and Glu523–Ala553. Residue Asn75 is modified to 3-hydroxyasparagine. The short motif at Arg490 to Asn498 is the D-box 1 element. An IQ 1 domain is found at Gln555–Lys584. Residues Arg589–Lys610 show a composition bias toward basic and acidic residues. The tract at residues Arg589–Ser889 is disordered. The segment covering Arg638–Ala649 has biased composition (polar residues). 3 stretches are compositionally biased toward basic and acidic residues: residues Lys688 to Lys698, Glu724 to Lys740, and Asp772 to Ser785. The segment covering Ser863–Ala872 has biased composition (polar residues). The short motif at Arg910 to Asn918 is the D-box 2 element. The 30-residue stretch at Lys917–Leu946 folds into the IQ 2 domain. Residues Arg1022 to Phe1050 form an ANK 17 repeat. Over residues Ser1051–Lys1061 the composition is skewed to polar residues. The disordered stretch occupies residues Ser1051–Ser1081.

Binds calmodulin via its IQ domains. Interacts with APC2. Interacts with alpha-, beta-, and gamma-catenin. Interacts with N-cadherin (CDH2). Interacts with NPHP1. Interacts with DVL1, PRICKLE (PRICKLE1 or PRICKLE2) and Strabismus (VANGL1 or VANGL2). Component of a complex containing at least ANKS6, INVS, NEK8 and NPHP3. ANKS6 may organize complex assembly by linking INVS and NPHP3 to NEK8 and INVS may target the complex to the proximal ciliary axoneme. Interacts with IQCB1; the interaction likely requires additional interactors. Interacts with microtubules. Post-translationally, may be ubiquitinated via its interaction with APC2. In terms of processing, hydroxylated at Asn-75, most probably by HIF1AN.

It localises to the cytoplasm. Its subcellular location is the cytoskeleton. The protein localises to the membrane. The protein resides in the spindle. It is found in the nucleus. Required for normal renal development and establishment of left-right axis. Probably acts as a molecular switch between different Wnt signaling pathways. Inhibits the canonical Wnt pathway by targeting cytoplasmic disheveled (DVL1) for degradation by the ubiquitin-proteasome. This suggests that it is required in renal development to oppose the repression of terminal differentiation of tubular epithelial cells by Wnt signaling. Involved in the organization of apical junctions in kidney cells together with NPHP1, NPHP4 and RPGRIP1L/NPHP8. Does not seem to be strictly required for ciliogenesis. This Canis lupus familiaris (Dog) protein is Inversin (INVS).